The chain runs to 545 residues: Methionine--tRNA ligase (545 aa).

A 'HIGH' region motif is present at residues 13–23 (PYANGPLHIGH). 4 residues coordinate Zn(2+): C144, C147, C157, and C160. The 'KMSKS' region signature appears at 330 to 334 (KISKS). K333 is a binding site for ATP.

This sequence belongs to the class-I aminoacyl-tRNA synthetase family. MetG type 1 subfamily. In terms of assembly, monomer. Zn(2+) serves as cofactor.

Its subcellular location is the cytoplasm. It catalyses the reaction tRNA(Met) + L-methionine + ATP = L-methionyl-tRNA(Met) + AMP + diphosphate. Is required not only for elongation of protein synthesis but also for the initiation of all mRNA translation through initiator tRNA(fMet) aminoacylation. The chain is Methionine--tRNA ligase from Blochmanniella floridana.